The sequence spans 326 residues: Protein FAM50 homolog (326 aa).

Positions 76-112 (EISNRDLQVARGASSSTSLAKDSQEAREKEEHVAKHT) are disordered. Over residues 97 to 109 (DSQEAREKEEHVA) the composition is skewed to basic and acidic residues.

This sequence belongs to the FAM50 family.

This chain is Protein FAM50 homolog, found in Caenorhabditis briggsae.